A 443-amino-acid polypeptide reads, in one-letter code: ATP-dependent protease ATPase subunit HslU (443 aa).

ATP is bound by residues Ile18, 60–65, Asp256, Glu321, and Arg393; that span reads GVGKTE.

This sequence belongs to the ClpX chaperone family. HslU subfamily. As to quaternary structure, a double ring-shaped homohexamer of HslV is capped on each side by a ring-shaped HslU homohexamer. The assembly of the HslU/HslV complex is dependent on binding of ATP.

It localises to the cytoplasm. Functionally, ATPase subunit of a proteasome-like degradation complex; this subunit has chaperone activity. The binding of ATP and its subsequent hydrolysis by HslU are essential for unfolding of protein substrates subsequently hydrolyzed by HslV. HslU recognizes the N-terminal part of its protein substrates and unfolds these before they are guided to HslV for hydrolysis. The sequence is that of ATP-dependent protease ATPase subunit HslU from Shigella boydii serotype 18 (strain CDC 3083-94 / BS512).